A 165-amino-acid polypeptide reads, in one-letter code: MDIAHDLQVIAAQEHALVFPQFDPDRAWQVGAYLHEVAKARGIPAAIDVRTFGQPLFFSLLDGATPDNVDWARRKGNTVAHFRRSSYAIGLKMQQAGSTLADKHGLPNTEYASHGGAFPLTVAGAGVIGSITVSGLPQRADHELVVEALCAHLGHDYSKLALAKA.

The protein belongs to the UPF0303 family.

This is UPF0303 protein Bxeno_A1932 from Paraburkholderia xenovorans (strain LB400).